Reading from the N-terminus, the 211-residue chain is Ras-related protein Rab-38 (211 aa).

Residues Gly19, Val20, Gly21, Lys22, Thr23, Ser24, Ser35, Ser36, Tyr38, and Thr41 each contribute to the GTP site. Thr23 contributes to the Mg(2+) binding site. The short motif at 32–46 (QNFSSHYRATIGVDF) is the Switch 1 element. Positions 41 and 65 each coordinate Mg(2+). 5 residues coordinate GTP: Gly68, Lys128, Asp130, Ala160, and Lys161. Positions 68-81 (GQERFGNMTRVYYR) match the Switch 2 motif. The S-palmitoyl cysteine moiety is linked to residue Cys205. Cys208 carries the S-geranylgeranyl cysteine lipid modification.

Belongs to the small GTPase superfamily. Rab family. Interacts with ANKRD27. Requires Mg(2+) as cofactor. Although at least one in vitro system can process and methylate the prenylated C-terminal, in an in vitro system that normally express Rab-38 and in vivo the prenylated C-terminal is not proteolytically processed and not methylated. In terms of tissue distribution, expressed in melanocytes.

The protein localises to the cell membrane. Its subcellular location is the melanosome. It localises to the cytoplasmic vesicle. The protein resides in the phagosome. It is found in the phagosome membrane. The protein localises to the melanosome membrane. It catalyses the reaction GTP + H2O = GDP + phosphate + H(+). Its activity is regulated as follows. Regulated by guanine nucleotide exchange factors (GEFs) including the BLOC-3 complex composed of HPS1 and HPS4 which promote the exchange of bound GDP for free GTP. Regulated by GTPase activating proteins (GAPs) including SGSM2 which increase the GTP hydrolysis activity. Inhibited by GDP dissociation inhibitors (GDIs). The small GTPases Rab are key regulators of intracellular membrane trafficking, from the formation of transport vesicles to their fusion with membranes. Rabs cycle between an inactive GDP-bound form and an active GTP-bound form that is able to recruit to membranes different sets of downstream effectors directly responsible for vesicle formation, movement, tethering and fusion. RAB38 may be involved in melanosomal transport and docking. Involved in the proper sorting of TYRP1. Involved in peripheral melanosomal distribution of TYRP1 in melanocytes; the function, which probably is implicating vesicle-trafficking, includes cooperation with ANKRD27 and VAMP7. Plays a role in the maturation of phagosomes that engulf pathogens, such as S.aureus and M.tuberculosis. Plays an important role in the control of melanin production and melanosome biogenesis. In concert with RAB32, regulates the proper trafficking of melanogenic enzymes TYR, TYRP1 and DCT/TYRP2 to melanosomes in melanocytes. The polypeptide is Ras-related protein Rab-38 (Homo sapiens (Human)).